A 728-amino-acid polypeptide reads, in one-letter code: Propionyl-CoA carboxylase alpha chain, mitochondrial (728 aa).

The N-terminal 52 residues, 1–52 (MAGFWVGTAPLVAAGRRGRWPPQQLMLSAALRTLKHVLYYSRQCLMVSRNLG), are a transit peptide targeting the mitochondrion. One can recognise a Biotin carboxylation domain in the interval 62 to 509 (TFDKILVANR…STKFLSDVYP (448 aa)). Position 65 is an N6-acetyllysine; alternate (Lys65). Lys65 carries the post-translational modification N6-succinyllysine; alternate. Position 119 is an N6-succinyllysine (Lys119). An N6-acetyllysine; alternate modification is found at Lys150. Position 150 is an N6-succinyllysine; alternate (Lys150). Lys177 contributes to the ATP binding site. The ATP-grasp domain maps to 181–378 (KLLAKKAEVN…LVQEMIRVAK (198 aa)). Lys200 carries the post-translational modification N6-acetyllysine; alternate. Position 200 is an N6-succinyllysine; alternate (Lys200). ATP contacts are provided by residues 209-270 (AREI…PRHI), Glu261, and Asn296. Position 252 is a phosphoserine (Ser252). At Lys262 the chain carries N6-succinyllysine. At Lys328 the chain carries N6-acetyllysine; alternate. Lys328 is modified (N6-succinyllysine; alternate). The Mg(2+) site is built by Glu336, Glu349, and Asn351. The Mn(2+) site is built by Glu336, Glu349, and Asn351. Residue Glu349 is part of the active site. 2 positions are modified to N6-succinyllysine: Lys385 and Lys407. Phe409 is a binding site for biotin. Lys496 is subject to N6-acetyllysine. N6-succinyllysine occurs at positions 502, 513, and 648. The Biotinyl-binding domain occupies 653-728 (KVTEDTSSVL…GEGDLLVELE (76 aa)). Residue Lys694 is modified to N6-biotinyllysine; by HLCS.

In terms of assembly, the holoenzyme is a dodecamer composed of 6 PCCA/alpha subunits and 6 PCCB/beta subunits. Interacts (via the biotin carboxylation domain) with SIRT4. Interacts with SIRT3 and SIRT5. Mg(2+) is required as a cofactor. The cofactor is Mn(2+). Biotin serves as cofactor. Post-translationally, acetylated. The biotin cofactor is covalently attached to the C-terminal biotinyl-binding domain and is required for the catalytic activity. Biotinylation is catalyzed by HLCS.

Its subcellular location is the mitochondrion matrix. The enzyme catalyses propanoyl-CoA + hydrogencarbonate + ATP = (S)-methylmalonyl-CoA + ADP + phosphate + H(+). The catalysed reaction is butanoyl-CoA + hydrogencarbonate + ATP = (2S)-ethylmalonyl-CoA + ADP + phosphate + H(+). It participates in metabolic intermediate metabolism; propanoyl-CoA degradation; succinyl-CoA from propanoyl-CoA: step 1/3. In terms of biological role, this is one of the 2 subunits of the biotin-dependent propionyl-CoA carboxylase (PCC), a mitochondrial enzyme involved in the catabolism of odd chain fatty acids, branched-chain amino acids isoleucine, threonine, methionine, and valine and other metabolites. Propionyl-CoA carboxylase catalyzes the carboxylation of propionyl-CoA/propanoyl-CoA to D-methylmalonyl-CoA/(S)-methylmalonyl-CoA. Within the holoenzyme, the alpha subunit catalyzes the ATP-dependent carboxylation of the biotin carried by the biotin carboxyl carrier (BCC) domain, while the beta subunit then transfers the carboxyl group from carboxylated biotin to propionyl-CoA. Propionyl-CoA carboxylase also significantly acts on butyryl-CoA/butanoyl-CoA, which is converted to ethylmalonyl-CoA/(2S)-ethylmalonyl-CoA at a much lower rate. Other alternative minor substrates include (2E)-butenoyl-CoA/crotonoyl-CoA. The sequence is that of Propionyl-CoA carboxylase alpha chain, mitochondrial from Homo sapiens (Human).